The chain runs to 327 residues: GTPase Obg (327 aa).

Residues 2-160 (HLFKDSLNLI…LNLRLELSLI (159 aa)) form the Obg domain. Positions 161-326 (ADIGLVGLPN…LVSEFFSLVK (166 aa)) constitute an OBG-type G domain. GTP-binding positions include 167–174 (GLPNAGKS), 192–196 (FTTKI), 213–216 (DLPG), 280–283 (SKLD), and 307–309 (SIY). Ser174 and Thr194 together coordinate Mg(2+).

Belongs to the TRAFAC class OBG-HflX-like GTPase superfamily. OBG GTPase family. As to quaternary structure, monomer. The cofactor is Mg(2+).

It localises to the cytoplasm. Functionally, an essential GTPase which binds GTP, GDP and possibly (p)ppGpp with moderate affinity, with high nucleotide exchange rates and a fairly low GTP hydrolysis rate. Plays a role in control of the cell cycle, stress response, ribosome biogenesis and in those bacteria that undergo differentiation, in morphogenesis control. The protein is GTPase Obg of Borrelia duttonii (strain Ly).